We begin with the raw amino-acid sequence, 175 residues long: Sec-independent protein translocase protein TatB (175 aa).

A helical membrane pass occupies residues 1-21 (MFDIGWSELVLIGVVALIAIG). Disordered stretches follow at residues 100–132 (KPAE…PTPE) and 155–175 (QAPV…AKAS). Positions 111-132 (EAPATSSEALTTPTTPEAPTPE) are enriched in low complexity.

Belongs to the TatB family. The Tat system comprises two distinct complexes: a TatABC complex, containing multiple copies of TatA, TatB and TatC subunits, and a separate TatA complex, containing only TatA subunits. Substrates initially bind to the TatABC complex, which probably triggers association of the separate TatA complex to form the active translocon.

The protein localises to the cell inner membrane. In terms of biological role, part of the twin-arginine translocation (Tat) system that transports large folded proteins containing a characteristic twin-arginine motif in their signal peptide across membranes. Together with TatC, TatB is part of a receptor directly interacting with Tat signal peptides. TatB may form an oligomeric binding site that transiently accommodates folded Tat precursor proteins before their translocation. The chain is Sec-independent protein translocase protein TatB from Bradyrhizobium diazoefficiens (strain JCM 10833 / BCRC 13528 / IAM 13628 / NBRC 14792 / USDA 110).